The following is a 34-amino-acid chain: U4-theraphotoxin-Hs1a (34 aa).

3 disulfides stabilise this stretch: Cys-3–Cys-17, Cys-10–Cys-22, and Cys-16–Cys-33.

The protein belongs to the neurotoxin 14 (magi-1) family. 05 (ICK-7) subfamily. Expressed by the venom gland.

The protein localises to the secreted. In terms of biological role, intracisternal injection paralyzes mice. This is U4-theraphotoxin-Hs1a from Cyriopagopus schmidti (Chinese bird spider).